The primary structure comprises 214 residues: Adenylate kinase (214 aa).

10–15 (GAGKGT) provides a ligand contact to ATP. An NMP region spans residues 30–59 (STGDMFRAAIKAGTELGKQAKALMDEGKLV). Residues T31, R36, 57–59 (KLV), 85–88 (GFPR), and Q92 each bind AMP. The tract at residues 122-159 (GRRVHQTSGRSYHIVYNPPKVEGKDDVTGEDLIIRADD) is LID. ATP contacts are provided by residues R123 and 132–133 (SY). R156 and R167 together coordinate AMP. Q200 lines the ATP pocket.

This sequence belongs to the adenylate kinase family. Monomer.

Its subcellular location is the cytoplasm. The enzyme catalyses AMP + ATP = 2 ADP. It functions in the pathway purine metabolism; AMP biosynthesis via salvage pathway; AMP from ADP: step 1/1. Catalyzes the reversible transfer of the terminal phosphate group between ATP and AMP. Plays an important role in cellular energy homeostasis and in adenine nucleotide metabolism. This is Adenylate kinase from Haemophilus influenzae (strain PittEE).